Here is a 129-residue protein sequence, read N- to C-terminus: Large ribosomal subunit protein bL17 (129 aa).

The protein belongs to the bacterial ribosomal protein bL17 family. As to quaternary structure, part of the 50S ribosomal subunit. Contacts protein L32.

This is Large ribosomal subunit protein bL17 from Pasteurella multocida (strain Pm70).